The sequence spans 217 residues: KH domain-containing protein 3 (217 aa).

The tract at residues 1-40 (MDAPRRFPTLVQLMQPKAMPVEVLGHLPKRFSWFHSEFLK) is involved in RNA binding. One can recognise a KH; atypical domain in the interval 40-103 (KNPKVVRLEV…SYQEDTIKMI (64 aa)). A disordered region spans residues 129 to 217 (QKAETQRSSI…EDARDPVTRL (89 aa)). The span at 138–155 (IEVREAGTQRSVEVREAG) shows a compositional bias: basic and acidic residues. Thr145 and Thr156 each carry phosphothreonine; by ATM. Polar residues-rich tracts occupy residues 156–170 (TQRSVEVQEVGTQGS) and 177–194 (AGTQQSLQAANKSGTQRS). Ser182 carries the post-translational modification Phosphoserine. The segment covering 205-217 (RFREDARDPVTRL) has biased composition (basic and acidic residues).

Belongs to the KHDC1 family. As to quaternary structure, component of the subcortical maternal complex (SCMC), at least composed of NLRP5, KHDC3L, OOEP, and TLE6 isoform 1. Within the complex, interacts with NLRP5, KHDC3L and TLE6 isoform 1. The SCMC may facilitate translocation of its components between the nuclear and cytoplasmic compartments. Forms a scaffold complex with OOEP/FLOPED, and interacts with BLM and TRIM25 at DNA replication forks. Interacts with PARP1; the interaction is increased following the formation of DNA double-strand breaks. Interacts with NUMA1. In terms of tissue distribution, expression appears to be maximal in germinal vesicle oocytes, it tails off through metaphase II oocytes and is undetectable following the completion of the oocyte to embryo transition.

Its subcellular location is the cytoplasm. The protein localises to the cell cortex. It is found in the nucleus. The protein resides in the mitochondrion. It localises to the cytoskeleton. Its subcellular location is the microtubule organizing center. The protein localises to the centrosome. It is found in the chromosome. Functionally, component of the subcortical maternal complex (SCMC), a multiprotein complex that plays a key role in early embryonic development. The SCMC complex is a structural constituent of cytoplasmic lattices, which consist in fibrous structures found in the cytoplasm of oocytes and preimplantation embryos. They are required to store maternal proteins critical for embryonic development, such as proteins that control epigenetic reprogramming of the preimplantation embryo, and prevent their degradation or activation. KHDC3 ensures proper spindle assembly by regulating the localization of AURKA via RHOA signaling and of PLK1 via a RHOA-independent process. Required for the localization of MAD2L1 to kinetochores to enable spindle assembly checkpoint function. As part of the OOEP-KHDC3 scaffold, recruits BLM and TRIM25 to DNA replication forks, thereby promoting the ubiquitination of BLM by TRIM25, enhancing BLM retainment at replication forks and therefore promoting stalled replication fork restart. Regulates homologous recombination-mediated DNA repair via recruitment of RAD51 to sites of DNA double-strand breaks, and sustainment of PARP1 activity, which in turn modulates downstream ATM or ATR activation. Activation of ATM or ATR in response to DNA double-strand breaks may be cell-type specific. Its role in DNA double-strand break repair is independent of its role in restarting stalled replication forks. Promotes neural stem cell neurogenesis and neuronal differentiation in the hippocampus. May regulate normal development of learning, memory and anxiety. Capable of binding RNA. The sequence is that of KH domain-containing protein 3 from Homo sapiens (Human).